The following is a 688-amino-acid chain: MTRKTFTLFDPTLALPAIADAFRKLNPAVQWRNPVMFVVYVGSILTTILWVQALGGQGEAPAGFILAITIWLWFTVLFANFAEALAEGRSKAQAASLRGLKKETWAKKLAEPRFGAQWQMTPAADLRKGDVIVVQAQETIPADGEVIEGVASVDESAITGESAPVIRESGGDFSAVTGGTRVLSDWIVVRVTVNPGETFVDRMIAMVENAKRQKTPNEIALTILLVALTIVFLGVIVTLLPFSMFSVEVAGAGTPISITVLIALLVCLIPTTIAGLLSAIGVAGMSRMMQANVIATSGRAVEAAGDVDVLLMDKTGTITLGNRQASVFLPADGVSEAELADAAQLASLADETPEGRSIVVLAKQRFQLRERDIHALDAHFVHFSAHTRMSGVDMAGRQVRKGAADAIRKHVEALGGKFPASVSGYVDEVARRGSTPLVVADGTRVMGVIELKDIVKGGIKERFAELRKMGIKTVMVTGDNRVTAAAIAAEAGVDDFLSEATPEAKLALIRKYQAEGRLVAMTGDGTNDAPALAQADVAVAMNTGTQAAKEAGNMVDLDSNPTKLIEVVETGKQMLMTRGSLTTFSIANDIAKYFAIIPAAFVTTYPQLAALNVMGLASPASAILSAVIFNALIIVFLIPLALKGVKYRPLGAATLLRQNLAIYGLGGVIVPFIGIKLIDLAIAAVGLA.

4 helical membrane-spanning segments follow: residues 35 to 55, 62 to 82, 219 to 239, and 260 to 280; these read VMFV…QALG, AGFI…ANFA, IALT…IVTL, and VLIA…LSAI. The 4-aspartylphosphate intermediate role is filled by D313. ATP contacts are provided by residues D350, E354, 383–390, and K401; that span reads FSAHTRMS. Mg(2+) contacts are provided by D524 and D528. The next 3 membrane-spanning stretches (helical) occupy residues 594–614, 622–642, and 668–688; these read FAII…LNVM, AILS…PLAL, and VIVP…VGLA.

The protein belongs to the cation transport ATPase (P-type) (TC 3.A.3) family. Type IA subfamily. In terms of assembly, the system is composed of three essential subunits: KdpA, KdpB and KdpC.

It is found in the cell inner membrane. The catalysed reaction is K(+)(out) + ATP + H2O = K(+)(in) + ADP + phosphate + H(+). In terms of biological role, part of the high-affinity ATP-driven potassium transport (or Kdp) system, which catalyzes the hydrolysis of ATP coupled with the electrogenic transport of potassium into the cytoplasm. This subunit is responsible for energy coupling to the transport system and for the release of the potassium ions to the cytoplasm. This is Potassium-transporting ATPase ATP-binding subunit from Dechloromonas aromatica (strain RCB).